We begin with the raw amino-acid sequence, 150 residues long: Large ribosomal subunit protein uL15 (150 aa).

The interval 1–55 (MADNEILQMHDLKPAPGAKKDRTRVGRGEGSKGKTSGRGAKGQTKRNHVRPGFEG) is disordered. The segment covering 8-32 (QMHDLKPAPGAKKDRTRVGRGEGSK) has biased composition (basic and acidic residues).

It belongs to the universal ribosomal protein uL15 family. In terms of assembly, part of the 50S ribosomal subunit.

Binds to the 23S rRNA. The chain is Large ribosomal subunit protein uL15 from Bifidobacterium longum (strain NCC 2705).